Consider the following 471-residue polypeptide: Tetratricopeptide repeat protein 29 (471 aa).

7 TPR repeats span residues 92-131 (DKLR…EAAE), 136-173 (YEEV…AQLI), 182-215 (AEAE…TQGR), 234-267 (VRTY…AREG), 274-307 (GEAS…STSL), 314-347 (GRAY…ARNN), and 354-387 (IQAC…AMEV).

Its subcellular location is the cytoplasm. The protein resides in the cytoskeleton. It localises to the flagellum axoneme. Its function is as follows. Axonemal protein which is implicated in axonemal and/or peri-axonemal structure assembly and regulates flagellum assembly and beating and therefore sperm motility. The sequence is that of Tetratricopeptide repeat protein 29 (Ttc29) from Rattus norvegicus (Rat).